A 1095-amino-acid polypeptide reads, in one-letter code: Formin-like protein 2 (1095 aa).

The 447-residue stretch at 23–469 (LPMPEPGELE…EAIQRQSTLE (447 aa)) folds into the GBD/FH3 domain. Positions 381–478 (LLEDAETKNA…EKKIHELEKQ (98 aa)) form a coiled coil. The segment at 521–602 (PSSGPLPPPP…PSAPPLPGTS (82 aa)) is disordered. Composition is skewed to pro residues over residues 524–534 (GPLPPPPPPLP), 548–576 (ATPP…PLPG), and 583–599 (PAPP…PPLP). An FH2 domain is found at 617 to 1008 (IKKPIKTKFR…LMEKLLEQEA (392 aa)).

This sequence belongs to the formin homology family. Interacts with TCP11L2; this interaction promotes muscle-derived satellite cell (MDSC) migration and differentiation.

The protein localises to the cytoplasm. Functionally, plays a role in the regulation of cell morphology and cytoskeletal organization. Required in the cortical actin filament dynamics. The sequence is that of Formin-like protein 2 from Bos taurus (Bovine).